A 341-amino-acid chain; its full sequence is Processive diacylglycerol beta-glycosyltransferase (341 aa).

The protein belongs to the glycosyltransferase 2 family. Requires Mg(2+) as cofactor.

Its subcellular location is the cell membrane. It catalyses the reaction a 1,2-diacyl-sn-glycerol + UDP-alpha-D-glucose = a 1,2-diacyl-3-O-(beta-D-glucopyranosyl)-sn-glycerol + UDP + H(+). It carries out the reaction a 1,2-diacyl-sn-glycerol + UDP-alpha-D-galactose = a 1,2-diacyl-3-O-(beta-D-galactosyl)-sn-glycerol + UDP + H(+). The enzyme catalyses a 1,2-diacyl-3-O-(beta-D-glucopyranosyl)-sn-glycerol + UDP-alpha-D-glucose = a 1,2-diacyl-3-O-(beta-D-Glc-(1-&gt;6)-beta-D-Glc)-sn-glycerol + UDP + H(+). The catalysed reaction is a 1,2-diacyl-3-O-(beta-D-galactosyl)-sn-glycerol + UDP-alpha-D-galactose = a 1,2-diacyl-3-O-[beta-D-galactosyl-(1-&gt;6)-beta-D-galactosyl]-sn-glycerol + UDP + H(+). The protein operates within glycolipid metabolism; diglucosyl-diacylglycerol biosynthesis. Its activity is regulated as follows. Activated by the negatively charged lipid dioleoylphosphatidylglycerol (DOPG) and inhibited by N-(n-nonyl)deoxygalactonojirimycin (C9J). In terms of biological role, processive glycosyltransferase involved in the biosynthesis of both the non-bilayer-prone beta-monoglycosyldiacylglycerol and the bilayer-forming membrane lipid beta-diglycosyldiacylglycerol. These components contribute to regulate the properties and stability of the membrane. Catalyzes sequentially the transfers of glucosyl or galactosyl residues from UDP-Glc or UDP-Gal to diacylglycerol (DAG) acceptor to form the corresponding beta-glycosyl-DAG (3-O-(beta-D-glycopyranosyl)-1,2-diacyl-sn-glycerol), which then acts as acceptor to give beta-diglycosyl-DAG product (3-O-(beta-D-glycopyranosyl-beta-(1-&gt;6)-D-glycopyranosyl)-1,2-diacyl-sn-glycerol). Dioleoylglycerol (DOG) is a preferred sugar acceptor than 3-O-(beta-D-glucopyranosyl)-1,2-dioleoyl-sn-glycerol. The polypeptide is Processive diacylglycerol beta-glycosyltransferase (Mycoplasma genitalium (strain ATCC 33530 / DSM 19775 / NCTC 10195 / G37) (Mycoplasmoides genitalium)).